A 113-amino-acid chain; its full sequence is Integration host factor subunit alpha (113 aa).

Positions 87–113 are disordered; sequence NALNGEVSDETTEGADDDDDEEGEGDE. Acidic residues predominate over residues 93-113; the sequence is VSDETTEGADDDDDEEGEGDE.

It belongs to the bacterial histone-like protein family. Heterodimer of an alpha and a beta chain.

In terms of biological role, this protein is one of the two subunits of integration host factor, a specific DNA-binding protein that functions in genetic recombination as well as in transcriptional and translational control. The chain is Integration host factor subunit alpha from Anaeromyxobacter dehalogenans (strain 2CP-1 / ATCC BAA-258).